Here is a 152-residue protein sequence, read N- to C-terminus: Ribosome maturation factor RimP (152 aa).

The protein belongs to the RimP family.

The protein resides in the cytoplasm. Required for maturation of 30S ribosomal subunits. In Yersinia enterocolitica serotype O:8 / biotype 1B (strain NCTC 13174 / 8081), this protein is Ribosome maturation factor RimP.